A 626-amino-acid polypeptide reads, in one-letter code: Nuclear RNA export factor 2 (626 aa).

S34 is subject to Phosphoserine. An RRM domain is found at 124 to 203; sequence WFKVTIPYGI…IFVNHSTAPY (80 aa). LRR repeat units follow at residues 271-296, 297-320, 321-348, and 349-376; these read ELLS…EKAP, KVKT…VKGL, KLEE…AIRD, and CFPK…ETMK. An NTF2 domain is found at 391–541; the sequence is LVLQFLQQYY…LCIVNDELFV (151 aa). Residues 570–625 enclose the TAP-C domain; the sequence is QEQQEMVQAFSAQSGMKLEWSQKCLQDNEWNYTRAGQAFTMLQTEGKIPAEAFKQI.

Belongs to the NXF family. As to quaternary structure, interacts with NXT1, NXT2, E1B-AP5, the REF proteins and with nucleoporins, Nup62, Nup153 and Nup214. Interacts with LUZP4. Expressed almost exclusively in testis. Also expressed in several cancers.

Its subcellular location is the nucleus. The protein localises to the nucleoplasm. It is found in the cytoplasm. Functionally, involved in the export of mRNA from the nucleus to the cytoplasm. The polypeptide is Nuclear RNA export factor 2 (NXF2) (Homo sapiens (Human)).